We begin with the raw amino-acid sequence, 304 residues long: Acetaldehyde dehydrogenase 4 (304 aa).

Residue C131 is the Acyl-thioester intermediate of the active site. NAD(+) contacts are provided by residues 162-170 (SAGPGTRKN) and N273.

The protein belongs to the acetaldehyde dehydrogenase family. As to quaternary structure, heterotetramer composed of two BphI (aldolase) and two BphJ (dehydrogenase).

The enzyme catalyses acetaldehyde + NAD(+) + CoA = acetyl-CoA + NADH + H(+). It carries out the reaction propanal + NAD(+) + CoA = propanoyl-CoA + NADH + H(+). It participates in xenobiotic degradation; polychlorinated biphenyl degradation. Bound pyruvate or other intermediates in the aldol addition reaction catalyzed by BphI allosterically activates BphJ reductive deacylation activity. Functionally, catalyzes the conversion of acetaldehyde or propanal to acetyl-CoA or propanoyl-CoA, respectively, using NAD(+) and coenzyme A. Displays broad specificity since it can utilize aliphatic aldehydes from two to five carbons in length as substrates; the aldehyde substrates can be directly channeled from the aldolase BphI to the dehydrogenase BphJ. Is the final enzyme in the meta-cleavage pathway for the degradation of polychlorinated biphenyls (PCBs). Is also able to utilize NADP(+) instead of NAD(+). Is not active with succinic semialdehyde or picolinaldehyde as substrates. Can also catalyze the reverse reaction, i.e. the reductive deacylation of acetyl-CoA to acetaldehyde, which is then channeled to the BphI active site. The BphI-BphJ enzyme complex exhibits unique bidirectionality in substrate channeling and allosteric activation. This chain is Acetaldehyde dehydrogenase 4 (bphJ), found in Paraburkholderia xenovorans (strain LB400).